The chain runs to 243 residues: Sugar fermentation stimulation protein homolog (243 aa).

Belongs to the SfsA family.

The polypeptide is Sugar fermentation stimulation protein homolog (Lacticaseibacillus casei (strain BL23) (Lactobacillus casei)).